A 149-amino-acid polypeptide reads, in one-letter code: Transcriptional repressor NrdR (149 aa).

The segment at 3–33 is a zinc-finger region; sequence CPFCSSEDTKVVDSRTTIDGSTKRRRECNNC. Residues 48-138 enclose the ATP-cone domain; it reads IYVVKKDNRR…VYKEFDDIKS (91 aa).

This sequence belongs to the NrdR family. The cofactor is Zn(2+).

In terms of biological role, negatively regulates transcription of bacterial ribonucleotide reductase nrd genes and operons by binding to NrdR-boxes. The chain is Transcriptional repressor NrdR from Fusobacterium nucleatum subsp. nucleatum (strain ATCC 25586 / DSM 15643 / BCRC 10681 / CIP 101130 / JCM 8532 / KCTC 2640 / LMG 13131 / VPI 4355).